The following is an 89-amino-acid chain: Putative regulatory protein CLH_1161 (89 aa).

This sequence belongs to the RemA family.

This is Putative regulatory protein CLH_1161 from Clostridium botulinum (strain Alaska E43 / Type E3).